The following is a 235-amino-acid chain: Elongation factor Tu, chloroplastic (235 aa).

In terms of domain architecture, tr-type G spans 1-125; sequence KNMITGAAQM…AVDEYIPTPV (125 aa). 47–50 provides a ligand contact to GTP; that stretch reads NKQD.

This sequence belongs to the TRAFAC class translation factor GTPase superfamily. Classic translation factor GTPase family. EF-Tu/EF-1A subfamily.

The protein localises to the plastid. The protein resides in the chloroplast. It carries out the reaction GTP + H2O = GDP + phosphate + H(+). GTP hydrolase that promotes the GTP-dependent binding of aminoacyl-tRNA to the A-site of ribosomes during protein biosynthesis. The chain is Elongation factor Tu, chloroplastic (tufA) from Gracilariopsis lemaneiformis (Red alga).